The primary structure comprises 76 residues: RNA-binding protein KhpA (76 aa).

Residues 29–76 (SLHIELSVHPDDMGKVIGKQGRTAKALRSVVYAAATKQKRRVRLDIID) form the KH domain.

The protein belongs to the KhpA RNA-binding protein family. In terms of assembly, forms a complex with KhpB.

It is found in the cytoplasm. Functionally, a probable RNA chaperone. Forms a complex with KhpB which binds to cellular RNA and controls its expression. Plays a role in peptidoglycan (PG) homeostasis and cell length regulation. The polypeptide is RNA-binding protein KhpA (Halalkalibacterium halodurans (strain ATCC BAA-125 / DSM 18197 / FERM 7344 / JCM 9153 / C-125) (Bacillus halodurans)).